Reading from the N-terminus, the 96-residue chain is Probable quinol oxidase subunit 4 (96 aa).

3 consecutive transmembrane segments (helical) span residues 8–28 (TVGFIASIVLTILAVFVTLYT), 36–56 (ITIIFGFAFIQAAVQLLMFMH), and 68–88 (FKVLFAIIITLITVIGTYWVM).

Belongs to the cytochrome c oxidase bacterial subunit 4 family.

The protein resides in the cell membrane. The enzyme catalyses 2 a quinol + O2 = 2 a quinone + 2 H2O. Its function is as follows. Catalyzes quinol oxidation with the concomitant reduction of oxygen to water. In Staphylococcus saprophyticus subsp. saprophyticus (strain ATCC 15305 / DSM 20229 / NCIMB 8711 / NCTC 7292 / S-41), this protein is Probable quinol oxidase subunit 4 (qoxD).